Consider the following 225-residue polypeptide: UPF0758 protein NMB1038 (225 aa).

The region spanning 102–224 (VLSDPDTVAD…VCSFRQLGLM (123 aa)) is the MPN domain. Zn(2+) is bound by residues H173, H175, and D186. Positions 173–186 (HNHPGGSPEPSQED) match the JAMM motif motif.

It belongs to the UPF0758 family.

The chain is UPF0758 protein NMB1038 from Neisseria meningitidis serogroup B (strain ATCC BAA-335 / MC58).